A 1032-amino-acid polypeptide reads, in one-letter code: MGPAKKPAMAGVNSKAEREADLVMGTNNSSIVSKRSVEMLYYSKPHFFRYFVKKPQRRSPLINRGYWLRMHAMAETVRKFMREPSDKPKFVLNLGCGFDPLPYMLLSADNDLCRDTTFVDIDYEKLMVNKKTAIRKTDEITQLLEDVEFLPDDSAVQIRSKPYLAIGCDLKNLTKLDTVLRAEVLPSECAVLFLAEVSLTYMDVKSANAVVSWASGLSNDAQFCILEQFFPDGPDHPFASTMMKHFKKLGAPLYSIHEYPSLNEQEQRFKDAGWNHAHARSLWDLWSDDEFVDGSLRASLDAIEPFDEWEEFALFGSHYFLLHASTRPRVSETATRTLTGLDPQTDKSGHFRLLAKCPPGSGQRRFGAVIPDSDKAVGHHSGLGRQTRLSSTELYTKSEGTTKTHEFPPGDIPARMCHTVTCLSNQDCLLVGGRASPASGFKDCWVRQGNQWRSTQSLPVPRFRHSAVKVTLDSEYVLVYGGKTSDGTTLNTWLAWSSKKQDWQQVETNSIHIKARFGACLGSINDTSGVLFGGIGAEGTILGDFFTWKLHQRSDGSLFMELTDHTDDLRRTSSLFNQIHRFGATVNQTAWGLVIVGGIVPRGIITHDKEIMLLDSTELTKCIASGWPSNHTIISALGLGNRLDGPRPLLVGHVSCAIDSKEILILGGGAVCFSFGTYWTEGTWLLQDVSSTTENDWTLIPESVEPNKSQSEKATSKPSAQSQNEPYRAAEVITPIPRVCVQNPAQFQDILAEGRPVIIEGSDVGPCTELWTKEYLTSAVGGDRKIVVHEAQSAHMSFQTKNFSYATKTFGTFMDEVYAGDRQYLRSISAEQPTKLPANLAVDFPSLSHDFRLPESLSIVTDNTHSSPLRISGPVTLWLHYDVMANVLCQIRGEKRLILFPPSDVQYLQVPPGASSSTINIFQSNGSVASIPHTSPQEAVLKRGDILFIPPLWLHTASPTGDVSVAVNVFFRNLSKGYAAGRDVYGNRDLQAYEKARNDIQKMAKSFDGLPSEMARFYLLRLAQELKDKAEK.

Residues Arg69, Gly95, Asp122, 169–170 (DL), and Glu196 each bind S-adenosyl-L-methionine. Positions 702–726 (ESVEPNKSQSEKATSKPSAQSQNEP) are disordered. A compositionally biased stretch (polar residues) spans 716-725 (SKPSAQSQNE). The region spanning 833–988 (PTKLPANLAV…AAGRDVYGNR (156 aa)) is the JmjC domain.

It belongs to the methyltransferase superfamily. LCMT family.

It catalyses the reaction 7-[(3S)-3-amino-3-carboxypropyl]wyosine(37) in tRNA(Phe) + S-adenosyl-L-methionine = 7-[(3S)-(3-amino-3-methoxycarbonyl)propyl]wyosine(37) in tRNA(Phe) + S-adenosyl-L-homocysteine. The catalysed reaction is 7-[(3S)-(3-amino-3-methoxycarbonyl)propyl]wyosine(37) in tRNA(Phe) + S-adenosyl-L-methionine + CO2 = wybutosine(37) in tRNA(Phe) + S-adenosyl-L-homocysteine + 2 H(+). It participates in tRNA modification; wybutosine-tRNA(Phe) biosynthesis. Its function is as follows. Probable S-adenosyl-L-methionine-dependent methyltransferase that acts as a component of the wybutosine biosynthesis pathway. Wybutosine is a hyper modified guanosine with a tricyclic base found at the 3'-position adjacent to the anticodon of eukaryotic phenylalanine tRNA. May methylate the carboxyl group of leucine residues to form alpha-leucine ester residues. This chain is tRNA wybutosine-synthesizing protein 4 (ppm2), found in Aspergillus oryzae (strain ATCC 42149 / RIB 40) (Yellow koji mold).